Consider the following 244-residue polypeptide: MTDLVYEQPLNEKIRSYLRLEYLNKQLGNNLNHDHQHRCFYPLFSLCELSERCDYRNEVLKDIERNLLQLGKWQELDHVDSEQIEFYIQSLAQAREQLQRPERCGSQLKQDRFLSALRQRFGMPGACCNFDLPQLHFWLAKPWEERQQDYQAWISHFDPLLTPITLLLQLTRSTAHFDNATAHAGFYQGDSAQALSLVRVKVDAAHGCYPTISGHRNRYAIHFVQFDQQRHSDRSIEFLLATCA.

It belongs to the ZapD family. As to quaternary structure, interacts with FtsZ.

It is found in the cytoplasm. Cell division factor that enhances FtsZ-ring assembly. Directly interacts with FtsZ and promotes bundling of FtsZ protofilaments, with a reduction in FtsZ GTPase activity. This Shewanella sp. (strain MR-7) protein is Cell division protein ZapD.